A 305-amino-acid chain; its full sequence is Homoserine kinase (305 aa).

An ATP-binding site is contributed by 90 to 100; the sequence is PLARGLGSSAS.

Belongs to the GHMP kinase family. Homoserine kinase subfamily.

It localises to the cytoplasm. The enzyme catalyses L-homoserine + ATP = O-phospho-L-homoserine + ADP + H(+). It participates in amino-acid biosynthesis; L-threonine biosynthesis; L-threonine from L-aspartate: step 4/5. Catalyzes the ATP-dependent phosphorylation of L-homoserine to L-homoserine phosphate. This is Homoserine kinase from Staphylococcus haemolyticus (strain JCSC1435).